Consider the following 2207-residue polypeptide: MTAAANWVANGASLEDCHSNLFSLAELTGIKWRRYNFGGHGDCGPIISAPAQDDPILLSFIRCLQANLLCVWRRDVKPDCKELWIFWWGDEPNLVGVIHHELQVVEEGLWENGLSYECRTLLFKAIHNLLERCLMDKNFVRIGKWFVRPYDKDEKPVNKSEHLSCAFTFFLHGESNVCTSVEIAQHQPIYLINEEHLHMAQSSPAPFQVLVSPYGLNGTLTGHAYKMSDPAARKLIEEWHCFYPMVLRKREEPREEAELGYDDDFPVAVEVIVGGVRMVYPSAFVLVSQNDIPVPQSGHGTVAQQGLGSVKDPSNCGMPLTPPTSPEQVVIGESGGVQSAASHLGSQDGGMSTMHSPKRSRKTPPKLHSHMVRRVWRECILSRAQSKRSQMSTPTREEEAAHSPAAWDFVDPTQRVSCSCSRHKLLKRCAVGPSRPPAISQPGFSAGLPSSSSLPPPASSKHKTTERQEKGDKLQKRPLVPFHHRPSVAEELCVEQDAPGQKLGLAGIDASLEVSNTRKYDKQMAVPSRNTSKQMNLNPMDSPHSPISPLPPTLSPQPRGQEAESLDPPSVPVNPALYGNGLDLQQLSTIEDRTVLVGQRLPLMAEASETALYSGLRPSYTESSDRWWQSFRLPSSEDAEFRPPELQGERFDTALDLNPESTALQRLLAQPNKRFKIWQDEQPQVQPLPFLDPSPLSQQPGDTLGEVNDPYTFEDGDIKYIFTANKKCKQGTEKDSLKKNKSEDGFGTKDVTTPGHSTPVPDGKNAMSIFSSATKTDVRQDSAAGRAGSGSLTQVTDLAPSLHDLDNIFDNSDDDELGAVSPALRSSKMPTVGTEERPPGKDGRAAGPYPPTVADLQRMFPTPPSLEQHPAFSPVMNYKDGVSSETVTALGMMESPVVSMVPTHLTEFRMEVEDGLGSPKPEEIKDFSYVHKVPQFQPFVGSSMFAPLKTLPSHCLLPLKTPDACLFRPSWAVPPKMEQLPMPPAASSIRDGYNNVPSVGSLADPDYVNTPQMNTPVTLNSAAPASNSGAGVLPSPATPRFSVPTPRTPRTPRTPRGGGTASGQGSVKYDSTDQGSPASTPSTTRPLNSVEPATMQPIPEAHSLYVTLILSDSVMNVFKDRNFDSCCICACNMNIKGADVGLYIPDSSKEDQYRCTCGFSAIVNRKLGYNSGLFLEDELDIFGKNSDIGQAAERRLMMCQSSGQSTLLPQVEGARKAPEPPVSLLLLLQNQHTQPFASLSFLDYISSANRHALPCVSWTYDRVQADNNDYWTECFNALEQGRQYVDNPTGGKVDEALVRSATVHCWPHSNVLDTSMLSSQDVVRMLLSLQPFLQDAIQKKRTGRTWENIQHVQGPLTWQQFHKMAGRGTYGSEESPEPLPIPTLLVGYDKEFLTISPFSLPFWERLLLEPYGGHRDVAYIVVCPENEALLEGAKTFFRDLSAVYEMCRLGQHKPICKVLRDGIMRVGKTVAQKLTEELVSEWFNQPWSSEESDNHSRLKLYAQVCRHHLAPYLATLQLDSGLLMPPKHQSPPAEAQGQATPGNAGSLPSNSGSGAPPAGSAFNPTSSSSANPTTSSSSASSGPPGSSAASAPGITQMNTTSSSGFGGGVGGQNPSAGGSSTDRTPGNVACGDTEPGQSCTQSSQDGQDSVTERERIGIPTEPDSADSHAYPPAVVIYMVDPFTYTAEEDSSSGNFWLLSLMRCYTEMLDHLPEHMRSSFILQIVPCQYMLQTMKDEHVFYIQYLKSMAFSVYCQCRRPLPTQIHIKSLTGFGPAASIEMTLKNPERPSPIQLYSPPFILAPIKDKQTEPGETFGEASQKYNVLFVGYCLSHDQRWLLASCTDLHGELLETCVVNIALPSRSRKSKVSARKVGLQKLWEWCLGIVQMTSLPWRVVIGRLGRLGHGELKDWSILLGECSLQTISKQLKDVCRMCGISAADSPSILSACLVAMEPQGSFVVMPDAVTMGSVFGRSTALNMQSSQLNTPQDASCTHILVFPTSSTIQVAPANYPNEDGFSPNNDDMFVDLPFPDDMDNDIGILMTGNLHSSPNSSPVPSPGSPSGIGVGSHFQHSRSQGERLLSREAPEELKQQPLALGYFVSTAKAENLPQWFWSSCPQARNQCPLFLKASLHHHISVAQTDELLPARTSQRAPHPLDSKTTSDVLRFVLEQYNALSWLTCNPATQDRTSCLPVHFVVLTQLYNAIMNML.

Residues 337 to 355 (VQSAASHLGSQDGGMSTMH) are compositionally biased toward polar residues. 4 disordered regions span residues 337–368 (VQSA…PKLH), 384–403 (AQSK…AAHS), 431–479 (VGPS…KRPL), and 519–574 (KYDK…VPVN). Residues 356–368 (SPKRSRKTPPKLH) are compositionally biased toward basic residues. Positions 384–394 (AQSKRSQMSTP) are enriched in polar residues. Residues 442–453 (PGFSAGLPSSSS) show a composition bias toward low complexity. The segment covering 463–475 (KTTERQEKGDKLQ) has biased composition (basic and acidic residues). The segment covering 528–539 (SRNTSKQMNLNP) has biased composition (polar residues). The span at 546–555 (PISPLPPTLS) shows a compositional bias: pro residues. Ser548 and Ser555 each carry phosphoserine. The LXXLL motif 1 signature appears at 664–668 (LQRLL). Residues 731–747 (GTEKDSLKKNKSEDGFG) show a composition bias toward basic and acidic residues. Positions 731-767 (GTEKDSLKKNKSEDGFGTKDVTTPGHSTPVPDGKNAM) are disordered. Residues Ser812 and Ser821 each carry the phosphoserine modification. Positions 816–847 (ELGAVSPALRSSKMPTVGTEERPPGKDGRAAG) are disordered. The span at 834 to 844 (TEERPPGKDGR) shows a compositional bias: basic and acidic residues. The residue at position 918 (Ser918) is a Phosphoserine. Residues 1004-1091 (DPDYVNTPQM…STTRPLNSVE (88 aa)) form a disordered region. Polar residues predominate over residues 1009–1019 (NTPQMNTPVTL). A compositionally biased stretch (low complexity) spans 1020–1031 (NSAAPASNSGAG). Residues 1072–1087 (TDQGSPASTPSTTRPL) show a composition bias toward polar residues. The short motif at 1224–1228 (LLLLL) is the LXXLL motif 2 element. The leucine-zipper stretch occupies residues 1379–1400 (LPIPTLLVGYDKEFLTISPFSL). Disordered regions lie at residues 1523–1652 (LMPP…SVTE) and 2042–2077 (GNLH…QGER). Low complexity predominate over residues 1541–1593 (PGNAGSLPSNSGSGAPPAGSAFNPTSSSSANPTTSSSSASSGPPGSSAASAPG). Composition is skewed to polar residues over residues 1612 to 1624 (QNPS…TDRT) and 1635 to 1649 (PGQS…GQDS). A Phosphoserine modification is found at Ser2080.

The protein belongs to the Mediator complex subunit 13 family. In terms of assembly, component of the Mediator complex, which is composed of MED1, MED4, MED6, MED7, MED8, MED9, MED10, MED11, MED12, MED13, MED13L, MED14, MED15, MED16, MED17, MED18, MED19, MED20, MED21, MED22, MED23, MED24, MED25, MED26, MED27, MED29, MED30, MED31, CCNC, CDK8 and CDC2L6/CDK11. The MED12, MED13, CCNC and CDK8 subunits form a distinct module termed the CDK8 module. Mediator containing the CDK8 module is less active than Mediator lacking this module in supporting transcriptional activation. Individual preparations of the Mediator complex lacking one or more distinct subunits have been variously termed ARC, CRSP, DRIP, PC2, SMCC and TRAP. As to expression, highly expressed in heart and weakly expressed in brain, spleen, lung, liver, kidney and testis.

It localises to the nucleus. Its function is as follows. Component of the Mediator complex, a coactivator involved in the regulated transcription of nearly all RNA polymerase II-dependent genes. Mediator functions as a bridge to convey information from gene-specific regulatory proteins to the basal RNA polymerase II transcription machinery. Mediator is recruited to promoters by direct interactions with regulatory proteins and serves as a scaffold for the assembly of a functional preinitiation complex with RNA polymerase II and the general transcription factors. This subunit may specifically regulate transcription of targets of the Wnt signaling pathway and SHH signaling pathway. In Mus musculus (Mouse), this protein is Mediator of RNA polymerase II transcription subunit 13-like (Med13l).